Consider the following 564-residue polypeptide: Urease subunit alpha (564 aa).

One can recognise a Urease domain in the interval 126–564 (GGIDTHIHFI…LPMAQRYFLF (439 aa)). Ni(2+) is bound by residues His131, His133, and Lys214. Position 214 is an N6-carboxylysine (Lys214). Residue His216 coordinates substrate. 2 residues coordinate Ni(2+): His243 and His269. His317 (proton donor) is an active-site residue. Asp357 serves as a coordination point for Ni(2+).

The protein belongs to the metallo-dependent hydrolases superfamily. Urease alpha subunit family. Heterotrimer of UreA (gamma), UreB (beta) and UreC (alpha) subunits. Three heterotrimers associate to form the active enzyme. It depends on Ni cation as a cofactor. In terms of processing, carboxylation allows a single lysine to coordinate two nickel ions.

The protein localises to the cytoplasm. It catalyses the reaction urea + 2 H2O + H(+) = hydrogencarbonate + 2 NH4(+). Its pathway is nitrogen metabolism; urea degradation; CO(2) and NH(3) from urea (urease route): step 1/1. The chain is Urease subunit alpha from Burkholderia pseudomallei (strain 1710b).